The following is a 172-amino-acid chain: NADH-ubiquinone oxidoreductase chain 6 (172 aa).

A run of 5 helical transmembrane segments spans residues 1–21, 26–48, 52–74, 86–106, and 147–167; these read MTNY…GLAL, IYGG…GFGG, GLMV…TAMA, WFIF…FYLF, and CATW…FIII.

The protein belongs to the complex I subunit 6 family. In terms of assembly, core subunit of respiratory chain NADH dehydrogenase (Complex I) which is composed of 45 different subunits.

It localises to the mitochondrion inner membrane. It catalyses the reaction a ubiquinone + NADH + 5 H(+)(in) = a ubiquinol + NAD(+) + 4 H(+)(out). Functionally, core subunit of the mitochondrial membrane respiratory chain NADH dehydrogenase (Complex I) which catalyzes electron transfer from NADH through the respiratory chain, using ubiquinone as an electron acceptor. Essential for the catalytic activity and assembly of complex I. This is NADH-ubiquinone oxidoreductase chain 6 from Rattus norvegicus (Rat).